Consider the following 89-residue polypeptide: Small ribosomal subunit protein uS15 (89 aa).

Belongs to the universal ribosomal protein uS15 family. As to quaternary structure, part of the 30S ribosomal subunit. Forms a bridge to the 50S subunit in the 70S ribosome, contacting the 23S rRNA.

In terms of biological role, one of the primary rRNA binding proteins, it binds directly to 16S rRNA where it helps nucleate assembly of the platform of the 30S subunit by binding and bridging several RNA helices of the 16S rRNA. Forms an intersubunit bridge (bridge B4) with the 23S rRNA of the 50S subunit in the ribosome. This is Small ribosomal subunit protein uS15 from Neisseria gonorrhoeae (strain ATCC 700825 / FA 1090).